Here is a 394-residue protein sequence, read N- to C-terminus: Protein STRICTOSIDINE SYNTHASE-LIKE 1 (394 aa).

Positions 1–21 are cleaved as a signal peptide; sequence MESLLLIAYAFLYLFLLSHEA. Basic and acidic residues predominate over residues 61-73; sequence GLEKRPNHSEDNP. Positions 61–92 are disordered; it reads GLEKRPNHSEDNPPSRGWTGEPGLDPRGEGPY. Asn67, Asn122, and Asn196 each carry an N-linked (GlcNAc...) asparagine glycan.

This sequence belongs to the strictosidine synthase family.

The protein resides in the vacuole. In Arabidopsis thaliana (Mouse-ear cress), this protein is Protein STRICTOSIDINE SYNTHASE-LIKE 1.